Consider the following 309-residue polypeptide: Serine/threonine-protein phosphatase 2A catalytic subunit beta isoform (309 aa).

The Mn(2+) site is built by Asp-57, His-59, Asp-85, and Asn-117. The active-site Proton donor is the His-118. Residues His-167 and His-241 each contribute to the Mn(2+) site. Phosphotyrosine is present on Tyr-307. Leucine methyl ester is present on Leu-309.

The protein belongs to the PPP phosphatase family. PP-1 subfamily. PP2A consists of a common heterodimeric core enzyme (composed of a 36 kDa catalytic subunit (subunit C) and a 65 kDa constant regulatory subunit (PR65) (subunit A)) that associates with a variety of regulatory subunits. Proteins that associate with the core dimer include three families of regulatory subunits B (the R2/B/PR55/B55, R3/B''/PR72/PR130/PR59 and R5/B'/B56 families), the 48 kDa variable regulatory subunit, viral proteins, and cell signaling molecules. Binds PPME1. May indirectly interact with SGO1, most probably through regulatory B56 subunits. Interacts with CTTNBP2NL. Interacts with PTPA. Found in a complex with at least ARL2, PPP2CB, PPP2R1A, PPP2R2A, PPP2R5E and TBCD. Interacts with TBCD. Part of the core of STRIPAK complexes composed of PP2A catalytic and scaffolding subunits, the striatins (PP2A regulatory subunits), the striatin-associated proteins MOB4, STRIP1 and STRIP2, PDCD10 and members of the STE20 kinases, such as STK24 and STK26. Mn(2+) serves as cofactor. In terms of processing, reversibly methyl esterified on Leu-309 by leucine carboxyl methyltransferase 1 (Lcmt1) and protein phosphatase methylesterase 1 (Ppme1). Carboxyl methylation influences the affinity of the catalytic subunit for the different regulatory subunits, thereby modulating the PP2A holoenzyme's substrate specificity, enzyme activity and cellular localization. Phosphorylation of either threonine (by autophosphorylation-activated protein kinase) or tyrosine results in inactivation of the phosphatase. Auto-dephosphorylation has been suggested as a mechanism for reactivation. Post-translationally, may be monoubiquitinated by NOSIP.

The protein localises to the cytoplasm. Its subcellular location is the nucleus. It localises to the chromosome. It is found in the centromere. The protein resides in the cytoskeleton. The protein localises to the spindle pole. The enzyme catalyses O-phospho-L-seryl-[protein] + H2O = L-seryl-[protein] + phosphate. It catalyses the reaction O-phospho-L-threonyl-[protein] + H2O = L-threonyl-[protein] + phosphate. Functionally, catalytic subunit of protein phosphatase 2A (PP2A), a serine/threonine phosphatase involved in the regulation of a wide variety of enzymes, signal transduction pathways, and cellular events. PP2A can modulate the activity of phosphorylase B kinase, casein kinase 2, mitogen-stimulated S6 kinase, and MAP-2 kinase. Part of the striatin-interacting phosphatase and kinase (STRIPAK) complexes. STRIPAK complexes have critical roles in protein (de)phosphorylation and are regulators of multiple signaling pathways including Hippo, MAPK, nuclear receptor and cytoskeleton remodeling. Different types of STRIPAK complexes are involved in a variety of biological processes such as cell growth, differentiation, apoptosis, metabolism and immune regulation. The sequence is that of Serine/threonine-protein phosphatase 2A catalytic subunit beta isoform (Ppp2cb) from Mus musculus (Mouse).